Reading from the N-terminus, the 88-residue chain is Small ribosomal subunit protein uS15 (88 aa).

Belongs to the universal ribosomal protein uS15 family. As to quaternary structure, part of the 30S ribosomal subunit. Forms a bridge to the 50S subunit in the 70S ribosome, contacting the 23S rRNA.

In terms of biological role, one of the primary rRNA binding proteins, it binds directly to 16S rRNA where it helps nucleate assembly of the platform of the 30S subunit by binding and bridging several RNA helices of the 16S rRNA. Its function is as follows. Forms an intersubunit bridge (bridge B4) with the 23S rRNA of the 50S subunit in the ribosome. The sequence is that of Small ribosomal subunit protein uS15 from Thermoanaerobacter pseudethanolicus (strain ATCC 33223 / 39E) (Clostridium thermohydrosulfuricum).